A 213-amino-acid chain; its full sequence is ATP phosphoribosyltransferase (213 aa).

It belongs to the ATP phosphoribosyltransferase family. Short subfamily. In terms of assembly, heteromultimer composed of HisG and HisZ subunits.

It localises to the cytoplasm. It carries out the reaction 1-(5-phospho-beta-D-ribosyl)-ATP + diphosphate = 5-phospho-alpha-D-ribose 1-diphosphate + ATP. The protein operates within amino-acid biosynthesis; L-histidine biosynthesis; L-histidine from 5-phospho-alpha-D-ribose 1-diphosphate: step 1/9. In terms of biological role, catalyzes the condensation of ATP and 5-phosphoribose 1-diphosphate to form N'-(5'-phosphoribosyl)-ATP (PR-ATP). Has a crucial role in the pathway because the rate of histidine biosynthesis seems to be controlled primarily by regulation of HisG enzymatic activity. The protein is ATP phosphoribosyltransferase of Variovorax paradoxus (strain S110).